The primary structure comprises 110 residues: Large ribosomal subunit protein uL22 (110 aa).

The protein belongs to the universal ribosomal protein uL22 family. As to quaternary structure, part of the 50S ribosomal subunit.

In terms of biological role, this protein binds specifically to 23S rRNA; its binding is stimulated by other ribosomal proteins, e.g. L4, L17, and L20. It is important during the early stages of 50S assembly. It makes multiple contacts with different domains of the 23S rRNA in the assembled 50S subunit and ribosome. The globular domain of the protein is located near the polypeptide exit tunnel on the outside of the subunit, while an extended beta-hairpin is found that lines the wall of the exit tunnel in the center of the 70S ribosome. The protein is Large ribosomal subunit protein uL22 of Actinobacillus pleuropneumoniae serotype 5b (strain L20).